We begin with the raw amino-acid sequence, 232 residues long: Charged multivesicular body protein 4c (232 aa).

Disordered stretches follow at residues 1 to 23 (MSKL…PSAQ) and 177 to 232 (NKKM…AWAT). Residues 1–153 (MSKLGKFFKG…EISEAFSQRV (153 aa)) are intramolecular interaction with C-terminus. Coiled coils occupy residues 21-45 (SAQE…YLEN) and 125-185 (LNKI…SLEL). The tract at residues 154-232 (QFADGFDEAE…DFKQLAAWAT (79 aa)) is intramolecular interaction with N-terminus. A Phosphoserine; by AURKB modification is found at Ser-210.

It belongs to the SNF7 family. As to quaternary structure, probable core component of the endosomal sorting required for transport complex III (ESCRT-III). ESCRT-III components are thought to multimerize to form a flat lattice on the perimeter membrane of the endosome. Several assembly forms of ESCRT-III may exist that interact and act sequentially. Self-associates. Interacts with CHMP2A. Interacts with CHMP4A. Interacts with CHMP4B. Interacts with CHMP6. Interacts with VPS4A. Interacts with PDCD6IP; the interaction is direct. Post-translationally, phosphorylated at Ser-210 by AURKB during cytokinesis: together with ZFYVE19/ANCHR, phosphorylated CHMP4C retains abscission-competent VPS4 (VPS4A and/or VPS4B) at the midbody ring until abscission checkpoint signaling is terminated at late cytokinesis.

Its subcellular location is the cytoplasm. The protein resides in the cytosol. It is found in the late endosome membrane. The protein localises to the midbody. It localises to the midbody ring. Probable core component of the endosomal sorting required for transport complex III (ESCRT-III) which is involved in multivesicular bodies (MVBs) formation and sorting of endosomal cargo proteins into MVBs. MVBs contain intraluminal vesicles (ILVs) that are generated by invagination and scission from the limiting membrane of the endosome and mostly are delivered to lysosomes enabling degradation of membrane proteins, such as stimulated growth factor receptors, lysosomal enzymes and lipids. The MVB pathway appears to require the sequential function of ESCRT-O, -I,-II and -III complexes. ESCRT-III proteins mostly dissociate from the invaginating membrane before the ILV is released. The ESCRT machinery also functions in topologically equivalent membrane fission events, such as the terminal stages of cytokinesis. Key component of the cytokinesis checkpoint, a process required to delay abscission to prevent both premature resolution of intercellular chromosome bridges and accumulation of DNA damage: upon phosphorylation by AURKB, together with ZFYVE19/ANCHR, retains abscission-competent VPS4 (VPS4A and/or VPS4B) at the midbody ring until abscission checkpoint signaling is terminated at late cytokinesis. Deactivation of AURKB results in dephosphorylation of CHMP4C followed by its dissociation from ANCHR and VPS4 and subsequent abscission. ESCRT-III proteins are believed to mediate the necessary vesicle extrusion and/or membrane fission activities, possibly in conjunction with the AAA ATPase VPS4. CHMP4A/B/C are required for the exosomal release of SDCBP, CD63 and syndecan. The protein is Charged multivesicular body protein 4c (Chmp4c) of Mus musculus (Mouse).